Here is a 150-residue protein sequence, read N- to C-terminus: Group IIC secretory phospholipase A2 (150 aa).

Positions 1 to 20 are cleaved as a signal peptide; the sequence is MKGIAIFLVFIFYWTTSTLS. 8 disulfide bridges follow: cysteine 46–cysteine 143, cysteine 48–cysteine 64, cysteine 63–cysteine 121, cysteine 69–cysteine 150, cysteine 70–cysteine 114, cysteine 79–cysteine 107, cysteine 97–cysteine 112, and cysteine 99–cysteine 105. 3 residues coordinate Ca(2+): tyrosine 47, glycine 49, and glycine 51. Histidine 67 is an active-site residue. Aspartate 68 lines the Ca(2+) pocket. N-linked (GlcNAc...) asparagine glycosylation is present at asparagine 92. Aspartate 115 is a catalytic residue.

Belongs to the phospholipase A2 family. Ca(2+) serves as cofactor. Testis specific.

Its subcellular location is the secreted. It carries out the reaction a 1,2-diacyl-sn-glycero-3-phosphocholine + H2O = a 1-acyl-sn-glycero-3-phosphocholine + a fatty acid + H(+). In terms of biological role, PA2 catalyzes the calcium-dependent hydrolysis of the 2-acyl groups in 3-sn-phosphoglycerides. Testis PA2 may be important in the production of prostaglandins, by the release of arachidonic acid, which in turn are necessary for the contractions of the seminiferous tubules and the testicular capsule; they also seem to decrease sperm transit time through the male reproductive tract. This is Group IIC secretory phospholipase A2 (Pla2g2c) from Mus musculus (Mouse).